Here is a 375-residue protein sequence, read N- to C-terminus: EP300-interacting inhibitor of differentiation 3 (375 aa).

Residues 23–51 (AWQHLVKQEEEEAVKKEEKEEGEDEEEEG) adopt a coiled-coil conformation. The segment at 30 to 68 (QEEEEAVKKEEKEEGEDEEEEGSDSSSDDPNPEPPCMHP) is disordered. The segment covering 42 to 60 (EEGEDEEEEGSDSSSDDPN) has biased composition (acidic residues).

This sequence belongs to the NSE4 family. Component of the SMC5-SMC6 complex which consists at least of SMC5, SMC6, NSMCE2, NSMCE1, NSMCE4A or EID3 and NSMCE3; EID3 seems to be a testis-specific subunit. NSMCE1, NSMCE4A or EID3 and NSMCE3 probably form a subcomplex that bridges the head domains of the SMC5:SMC6 heterodimer. Homodimer, and heterodimer with EID2. Interacts with the C-terminal region of CREBBP.

The protein resides in the nucleus. It localises to the cytoplasm. Its subcellular location is the chromosome. The protein localises to the telomere. Tissue-specific component of the SMC5-SMC6 complex, a complex involved in repair of DNA double-strand breaks by homologous recombination. The complex may promote sister chromatid homologous recombination by recruiting the SMC1-SMC3 cohesin complex to double-strand breaks. The complex is required for telomere maintenance via recombination and mediates sumoylation of shelterin complex (telosome) components. Its function is as follows. Acts as a repressor of nuclear receptor-dependent transcription possibly by interfering with CREBBP-dependent coactivation. May function as a coinhibitor of other CREBBP/EP300-dependent transcription factors. The sequence is that of EP300-interacting inhibitor of differentiation 3 from Mus musculus (Mouse).